Here is a 369-residue protein sequence, read N- to C-terminus: Putative F-box/kelch-repeat protein At4g39760 (369 aa).

The F-box domain occupies 14–60; it reads SLSFSSLPHEIVVSCLARVSGSYYPKLCLVSKQFRSIILSNEIYKAR. 3 Kelch repeats span residues 131–177, 178–224, and 228–274; these read ETYI…GQYP, NIYV…KMKM, and NVYV…KNCW.

The sequence is that of Putative F-box/kelch-repeat protein At4g39760 from Arabidopsis thaliana (Mouse-ear cress).